Here is a 435-residue protein sequence, read N- to C-terminus: MDFNIEEVSAVEREIKVSVPAEEVGAALDATVALYKVQTPVKGFRKGKVPASVIQSKYKKQIINEATTDLINYQINDILNGQSLVPVSKIDVDAKELVRGEDFSYVIKFEIVPEFDTPGYLGLPVEEERAEVTEDELKEVENRLLQSMAKIAPIEDDRPAKDGELASVTFSAEMDGEPIPGVQADNFDLPIGEGHSLEEFEEFVKTLKAGESGETDITFPEDFINSDLAGKTATMKVTVHAVKERKMPELTDDVVKQAGGFESVEKMREIVKQSYTANRKQLNKSAAQTKLISGIVKELDFPLPPSLMEDRLQRMVADVIGRAERSGKSFESLGKSMEELREEQRPVAEESVRTEIFLLNVAKREELSVEPQEVEGALYQIAQQTQQDLSSVKSYYEENNLIVPLKDRLLADKAAEFIYENADVTEIDPVKKDDK.

Residues 163–248 form the PPIase FKBP-type domain; sequence GELASVTFSA…VHAVKERKMP (86 aa).

Belongs to the FKBP-type PPIase family. Tig subfamily.

It is found in the cytoplasm. It catalyses the reaction [protein]-peptidylproline (omega=180) = [protein]-peptidylproline (omega=0). Involved in protein export. Acts as a chaperone by maintaining the newly synthesized protein in an open conformation. Functions as a peptidyl-prolyl cis-trans isomerase. The protein is Trigger factor of Maridesulfovibrio salexigens (strain ATCC 14822 / DSM 2638 / NCIMB 8403 / VKM B-1763) (Desulfovibrio salexigens).